The sequence spans 354 residues: Holliday junction branch migration complex subunit RuvB (354 aa).

A disordered region spans residues 1–24 (MSIQTDDFAPVPPPKRVVSAAPTS). The interval 5 to 195 (TDDFAPVPPP…FGIVARLEFY (191 aa)) is large ATPase domain (RuvB-L). ATP contacts are provided by residues leucine 34, arginine 35, glycine 76, lysine 79, threonine 80, threonine 81, 142–144 (EDY), arginine 185, tyrosine 195, and arginine 232. Residue threonine 80 participates in Mg(2+) binding. Residues 196–266 (TPEELSRIVT…IAQRALAMLD (71 aa)) form a small ATPAse domain (RuvB-S) region. The head domain (RuvB-H) stretch occupies residues 269–354 (PQGFDVMDRK…RQHTDLFGPA (86 aa)). Positions 324 and 329 each coordinate DNA.

It belongs to the RuvB family. In terms of assembly, homohexamer. Forms an RuvA(8)-RuvB(12)-Holliday junction (HJ) complex. HJ DNA is sandwiched between 2 RuvA tetramers; dsDNA enters through RuvA and exits via RuvB. An RuvB hexamer assembles on each DNA strand where it exits the tetramer. Each RuvB hexamer is contacted by two RuvA subunits (via domain III) on 2 adjacent RuvB subunits; this complex drives branch migration. In the full resolvosome a probable DNA-RuvA(4)-RuvB(12)-RuvC(2) complex forms which resolves the HJ.

The protein localises to the cytoplasm. The catalysed reaction is ATP + H2O = ADP + phosphate + H(+). The RuvA-RuvB-RuvC complex processes Holliday junction (HJ) DNA during genetic recombination and DNA repair, while the RuvA-RuvB complex plays an important role in the rescue of blocked DNA replication forks via replication fork reversal (RFR). RuvA specifically binds to HJ cruciform DNA, conferring on it an open structure. The RuvB hexamer acts as an ATP-dependent pump, pulling dsDNA into and through the RuvAB complex. RuvB forms 2 homohexamers on either side of HJ DNA bound by 1 or 2 RuvA tetramers; 4 subunits per hexamer contact DNA at a time. Coordinated motions by a converter formed by DNA-disengaged RuvB subunits stimulates ATP hydrolysis and nucleotide exchange. Immobilization of the converter enables RuvB to convert the ATP-contained energy into a lever motion, pulling 2 nucleotides of DNA out of the RuvA tetramer per ATP hydrolyzed, thus driving DNA branch migration. The RuvB motors rotate together with the DNA substrate, which together with the progressing nucleotide cycle form the mechanistic basis for DNA recombination by continuous HJ branch migration. Branch migration allows RuvC to scan DNA until it finds its consensus sequence, where it cleaves and resolves cruciform DNA. The sequence is that of Holliday junction branch migration complex subunit RuvB from Paracidovorax citrulli (strain AAC00-1) (Acidovorax citrulli).